The primary structure comprises 80 residues: Secreted transmembrane peptide 3 (80 aa).

Positions 1-27 (MGLKMSSNALLLSLFLLLLCLFSEIGG) are cleaved as a signal peptide. The interval 44–80 (IATPPSLTCGGQRLGGPQPRLSPCPRPRPRPRPRTGS) is disordered. The SCOOP motif signature appears at 62–80 (PRLSPCPRPRPRPRPRTGS). Over residues 70–80 (PRPRPRPRTGS) the composition is skewed to basic residues.

Belongs to the serine rich endogenous peptide (SCOOP) phytocytokine family. As to quaternary structure, interacts with MIK2 (via extracellular leucine-rich repeat domain); this interaction triggers the formation of complex between MIK2 and the BAK1/SERK3 and SERK4 coreceptors, and subsequent BAK1 activation by phosphorylation. Mostly expressed in leaves, and, to a lower extent, in roots, stems, siliques, seeds and flowers.

Its subcellular location is the cell membrane. It localises to the secreted. The protein resides in the extracellular space. The protein localises to the apoplast. It is found in the endoplasmic reticulum. Its subcellular location is the golgi apparatus. Functionally, brassicaceae-specific phytocytokine (plant endogenous peptide released into the apoplast) perceived by MIK2 in a BAK1/SERK3 and SERK4 coreceptors-dependent manner, that modulates various physiological and antimicrobial processes including growth prevention and reactive oxygen species (ROS) response regulation. This is Secreted transmembrane peptide 3 from Arabidopsis thaliana (Mouse-ear cress).